The sequence spans 554 residues: Glucose-6-phosphate isomerase (554 aa).

E359 (proton donor) is an active-site residue. Residues H390 and K518 contribute to the active site.

The protein belongs to the GPI family.

The protein resides in the cytoplasm. It catalyses the reaction alpha-D-glucose 6-phosphate = beta-D-fructose 6-phosphate. The protein operates within carbohydrate biosynthesis; gluconeogenesis. It participates in carbohydrate degradation; glycolysis; D-glyceraldehyde 3-phosphate and glycerone phosphate from D-glucose: step 2/4. Catalyzes the reversible isomerization of glucose-6-phosphate to fructose-6-phosphate. In Pseudomonas savastanoi pv. phaseolicola (strain 1448A / Race 6) (Pseudomonas syringae pv. phaseolicola (strain 1448A / Race 6)), this protein is Glucose-6-phosphate isomerase.